The sequence spans 119 residues: Basic phospholipase A2 notexin (119 aa).

7 disulfide bridges follow: cysteine 11-cysteine 71, cysteine 27-cysteine 118, cysteine 29-cysteine 45, cysteine 44-cysteine 99, cysteine 51-cysteine 92, cysteine 60-cysteine 85, and cysteine 78-cysteine 90. Ca(2+) is bound by residues tyrosine 28, glycine 30, and glycine 32. Histidine 48 is a catalytic residue. Aspartate 49 contributes to the Ca(2+) binding site. Aspartate 93 is an active-site residue.

This sequence belongs to the phospholipase A2 family. Group I subfamily. D49 sub-subfamily. In terms of assembly, monomer. It depends on Ca(2+) as a cofactor. In terms of tissue distribution, expressed by the venom gland.

It localises to the secreted. The enzyme catalyses a 1,2-diacyl-sn-glycero-3-phosphocholine + H2O = a 1-acyl-sn-glycero-3-phosphocholine + a fatty acid + H(+). In terms of biological role, snake venom phospholipase A2 (PLA2) that inhibits neuromuscular transmission by blocking acetylcholine release from the nerve termini. Is directly toxic to skeletal muscle upon local application in vivo (dystrophic effect). Also has direct nephrotoxicity in experimental mice; a single subcutaneous dose (1.38 ug/kg) produces renal tubular and glomerular damage within 24 hours. PLA2 catalyzes the calcium-dependent hydrolysis of the 2-acyl groups in 3-sn-phosphoglycerides. The protein is Basic phospholipase A2 notexin of Notechis scutatus scutatus (Mainland tiger snake).